A 706-amino-acid polypeptide reads, in one-letter code: Elongation factor G (706 aa).

One can recognise a tr-type G domain in the interval 15-291; the sequence is LKTRNIGISA…GVLDYLASPV (277 aa). GTP is bound by residues 24–31, 91–95, and 145–148; these read AHIDSGKT, DTPGH, and NKLD.

Belongs to the TRAFAC class translation factor GTPase superfamily. Classic translation factor GTPase family. EF-G/EF-2 subfamily.

It is found in the cytoplasm. In terms of biological role, catalyzes the GTP-dependent ribosomal translocation step during translation elongation. During this step, the ribosome changes from the pre-translocational (PRE) to the post-translocational (POST) state as the newly formed A-site-bound peptidyl-tRNA and P-site-bound deacylated tRNA move to the P and E sites, respectively. Catalyzes the coordinated movement of the two tRNA molecules, the mRNA and conformational changes in the ribosome. This chain is Elongation factor G, found in Leptospira interrogans serogroup Icterohaemorrhagiae serovar copenhageni (strain Fiocruz L1-130).